Consider the following 538-residue polypeptide: Chaperonin GroEL 1 (538 aa).

ATP contacts are provided by residues 29 to 32 (TLGP), 86 to 90 (DGTTT), Gly413, 478 to 480 (NAA), and Asp494.

Belongs to the chaperonin (HSP60) family. In terms of assembly, forms a cylinder of 14 subunits composed of two heptameric rings stacked back-to-back. Interacts with the co-chaperonin GroES.

Its subcellular location is the cytoplasm. It catalyses the reaction ATP + H2O + a folded polypeptide = ADP + phosphate + an unfolded polypeptide.. In terms of biological role, together with its co-chaperonin GroES, plays an essential role in assisting protein folding. The GroEL-GroES system forms a nano-cage that allows encapsulation of the non-native substrate proteins and provides a physical environment optimized to promote and accelerate protein folding. The polypeptide is Chaperonin GroEL 1 (Corynebacterium glutamicum (strain ATCC 13032 / DSM 20300 / JCM 1318 / BCRC 11384 / CCUG 27702 / LMG 3730 / NBRC 12168 / NCIMB 10025 / NRRL B-2784 / 534)).